Reading from the N-terminus, the 201-residue chain is Small ribosomal subunit protein uS4 (201 aa).

The region spanning 91-155 (TRLDNVVYRA…STLPFQVARE (65 aa)) is the S4 RNA-binding domain.

Belongs to the universal ribosomal protein uS4 family. Part of the 30S ribosomal subunit. Contacts protein S5. The interaction surface between S4 and S5 is involved in control of translational fidelity.

Functionally, one of the primary rRNA binding proteins, it binds directly to 16S rRNA where it nucleates assembly of the body of the 30S subunit. In terms of biological role, with S5 and S12 plays an important role in translational accuracy. The protein is Small ribosomal subunit protein uS4 of Nocardia farcinica (strain IFM 10152).